The primary structure comprises 146 residues: Ribonuclease H (146 aa).

The RNase H type-1 domain occupies 1-136 (MKHIEIYTDG…CDTLAREAAL (136 aa)). Mg(2+) contacts are provided by Asp-9, Glu-47, Asp-69, and Asp-128.

The protein belongs to the RNase H family. As to quaternary structure, monomer. Requires Mg(2+) as cofactor.

The protein localises to the cytoplasm. The catalysed reaction is Endonucleolytic cleavage to 5'-phosphomonoester.. Its function is as follows. Endonuclease that specifically degrades the RNA of RNA-DNA hybrids. The protein is Ribonuclease H of Campylobacter jejuni subsp. jejuni serotype O:23/36 (strain 81-176).